We begin with the raw amino-acid sequence, 246 residues long: Probable septum site-determining protein MinC (246 aa).

It belongs to the MinC family. In terms of assembly, interacts with MinD and FtsZ.

Cell division inhibitor that blocks the formation of polar Z ring septums. Rapidly oscillates between the poles of the cell to destabilize FtsZ filaments that have formed before they mature into polar Z rings. Prevents FtsZ polymerization. This is Probable septum site-determining protein MinC from Pseudomonas savastanoi pv. phaseolicola (strain 1448A / Race 6) (Pseudomonas syringae pv. phaseolicola (strain 1448A / Race 6)).